We begin with the raw amino-acid sequence, 711 residues long: Ribosomal RNA large subunit methyltransferase K/L (711 aa).

The THUMP domain maps to 43–154 (LAYRITLWTR…NGVITIAMNF (112 aa)).

Belongs to the methyltransferase superfamily. RlmKL family.

The protein resides in the cytoplasm. The enzyme catalyses guanosine(2445) in 23S rRNA + S-adenosyl-L-methionine = N(2)-methylguanosine(2445) in 23S rRNA + S-adenosyl-L-homocysteine + H(+). It carries out the reaction guanosine(2069) in 23S rRNA + S-adenosyl-L-methionine = N(2)-methylguanosine(2069) in 23S rRNA + S-adenosyl-L-homocysteine + H(+). Its function is as follows. Specifically methylates the guanine in position 2445 (m2G2445) and the guanine in position 2069 (m7G2069) of 23S rRNA. This is Ribosomal RNA large subunit methyltransferase K/L from Shewanella oneidensis (strain ATCC 700550 / JCM 31522 / CIP 106686 / LMG 19005 / NCIMB 14063 / MR-1).